An 876-amino-acid polypeptide reads, in one-letter code: Alanine--tRNA ligase (876 aa).

Lys-74 bears the N6-acetyllysine mark. 4 residues coordinate Zn(2+): His-564, His-568, Cys-666, and His-670.

Belongs to the class-II aminoacyl-tRNA synthetase family. In terms of assembly, homotetramer. The cofactor is Zn(2+).

Its subcellular location is the cytoplasm. The catalysed reaction is tRNA(Ala) + L-alanine + ATP = L-alanyl-tRNA(Ala) + AMP + diphosphate. Its function is as follows. Catalyzes the attachment of alanine to tRNA(Ala) in a two-step reaction: alanine is first activated by ATP to form Ala-AMP and then transferred to the acceptor end of tRNA(Ala). Also edits incorrectly charged Ser-tRNA(Ala) and Gly-tRNA(Ala) via its editing domain. The polypeptide is Alanine--tRNA ligase (Escherichia coli O6:K15:H31 (strain 536 / UPEC)).